Consider the following 1605-residue polypeptide: Kinesin-like protein klp-12 (1605 aa).

The Kinesin motor domain occupies 5–358 (CVQVALRIRP…MKYANRAKEI (354 aa)). 84–91 (GQTGSGKT) is a binding site for ATP. Mg(2+) contacts are provided by threonine 91 and serine 217. Disordered stretches follow at residues 548–596 (GENV…EESE), 1085–1152 (VSDA…SNNN), and 1198–1232 (SRSNLMSSSSSTTTTTLSSSNLLNPRGTTSSSSSK). Residues 550–559 (NVSSEYSSMA) show a composition bias toward polar residues. The segment covering 560–596 (QDEDGTSNEAEELLDEEDLDEDEDETAEEKQEQEESE) has biased composition (acidic residues). A coiled-coil region spans residues 575-730 (EEDLDEDEDE…KKAKVELIKK (156 aa)). A compositionally biased stretch (polar residues) spans 1116 to 1152 (VSTSPASTSFANSTSQSPSFSRNTRFRSTVGGVSNNN). Residues 1200–1232 (SNLMSSSSSTTTTTLSSSNLLNPRGTTSSSSSK) are compositionally biased toward low complexity. WD repeat units follow at residues 1282-1319 (GHARGVLSVDVNEKLMVTGSKDRTAKLWDIEACREIRT), 1389-1427 (FLETLITAADVDPTGQLLFTSFSAYVRVWNLREWKPLGR), 1525-1566 (AHQQ…RMKL), and 1573-1605 (AHQEGINDMCSTKSMLFTASGDSTVGFWKSNAV).

The protein belongs to the TRAFAC class myosin-kinesin ATPase superfamily. Kinesin family. Component of a complex at least composed of alpha tubulin and beta tubulin. Within the complex, interacts with the alpha tubulin and beta tubulin dimer.

Its subcellular location is the cytoplasm. It localises to the cytoskeleton. Microtubule-binding motor protein which has ATPase activity. In complex with alpha and beta tubulins, preferentially binds to the growing microtubule plus-end to stabilize it and detaches following ATP hydrolysis. Negatively regulates axonal length through inhibiting microtubule polymerization at its plus-end. This Caenorhabditis elegans protein is Kinesin-like protein klp-12.